A 124-amino-acid chain; its full sequence is Ribonuclease pancreatic (124 aa).

The tract at residues 1 to 21 is disordered; the sequence is AESSAMKFQRQHMDSDGHPDT. Lys7 and Arg10 together coordinate substrate. His12 functions as the Proton acceptor in the catalytic mechanism. Disulfide bonds link Cys26–Cys84, Cys40–Cys95, Cys58–Cys110, and Cys65–Cys72. Substrate-binding positions include 41-45, Lys66, and Arg85; that span reads KPVNT. Residue His119 is the Proton donor of the active site.

The protein belongs to the pancreatic ribonuclease family. As to quaternary structure, monomer. Interacts with and forms tight 1:1 complexes with RNH1. Dimerization of two such complexes may occur. Interaction with RNH1 inhibits this protein. In terms of tissue distribution, pancreas.

It is found in the secreted. The enzyme catalyses an [RNA] containing cytidine + H2O = an [RNA]-3'-cytidine-3'-phosphate + a 5'-hydroxy-ribonucleotide-3'-[RNA].. It catalyses the reaction an [RNA] containing uridine + H2O = an [RNA]-3'-uridine-3'-phosphate + a 5'-hydroxy-ribonucleotide-3'-[RNA].. Functionally, endonuclease that catalyzes the cleavage of RNA on the 3' side of pyrimidine nucleotides. Acts on single-stranded and double-stranded RNA. This is Ribonuclease pancreatic (RNASE1) from Galea musteloides (Common yellow-toothed cavy).